The chain runs to 213 residues: Type II restriction enzyme BamHI (213 aa).

Glutamate 77, aspartate 94, glutamate 111, and phenylalanine 112 together coordinate Mg(2+). The Proton acceptor role is filled by glutamate 113.

Homodimer. Mg(2+) is required as a cofactor.

It carries out the reaction Endonucleolytic cleavage of DNA to give specific double-stranded fragments with terminal 5'-phosphates.. A P subtype restriction enzyme that recognizes the double-stranded sequence 5'-GGATCC-3' and cleaves after G-1. The polypeptide is Type II restriction enzyme BamHI (Bacillus amyloliquefaciens (Bacillus velezensis)).